Here is a 955-residue protein sequence, read N- to C-terminus: UvrABC system protein A (955 aa).

35 to 42 (GLSGSGKS) contacts ATP. 2 ABC transporter domains span residues 322–601 (WGST…EESI) and 621–951 (GHDN…RYLK). Residue 654-661 (GVSGSGKS) participates in ATP binding. The C4-type zinc finger occupies 754–780 (CEACQGDGLIKIEMHFLPDVYVKCDIC).

The protein belongs to the ABC transporter superfamily. UvrA family. Forms a heterotetramer with UvrB during the search for lesions.

The protein localises to the cytoplasm. The UvrABC repair system catalyzes the recognition and processing of DNA lesions. UvrA is an ATPase and a DNA-binding protein. A damage recognition complex composed of 2 UvrA and 2 UvrB subunits scans DNA for abnormalities. When the presence of a lesion has been verified by UvrB, the UvrA molecules dissociate. The sequence is that of UvrABC system protein A from Rickettsia conorii (strain ATCC VR-613 / Malish 7).